The primary structure comprises 191 residues: Guanylate kinase (191 aa).

The Guanylate kinase-like domain occupies 6-184; that stretch reads GLIIILSSPS…TIQQIHTIIL (179 aa). Residue 13–20 coordinates ATP; the sequence is SPSGAGKS.

It belongs to the guanylate kinase family.

The protein resides in the cytoplasm. The enzyme catalyses GMP + ATP = GDP + ADP. In terms of biological role, essential for recycling GMP and indirectly, cGMP. This chain is Guanylate kinase, found in Rickettsia bellii (strain RML369-C).